A 1029-amino-acid chain; its full sequence is Cilia- and flagella-associated protein 91 (1029 aa).

Disordered stretches follow at residues 72–97 (NYRP…GPNR) and 117–170 (PPSQ…PWEP). Positions 272 to 299 (LELLDNALQVREEELDDENRLRVEARKE) form a coiled coil. The segment covering 837–854 (ENQDQQEPQPQPQPSSSS) has biased composition (low complexity). Disordered stretches follow at residues 837 to 861 (ENQD…DLAD) and 876 to 1029 (GEPS…EAAE). Residues 890-910 (QQLEADAEAEAEAEAEAEAGA) are compositionally biased toward acidic residues. Residues 911–921 (EAEASAQAGAE) are compositionally biased toward low complexity. Residues 922–932 (AEAEAGVEAEA) are compositionally biased toward acidic residues. The span at 933–944 (EASAGAEASVGA) shows a compositional bias: low complexity. Positions 964–982 (PEAEAEAEAGAEAEAENGA) are enriched in acidic residues. Basic and acidic residues predominate over residues 984–999 (AEARLGGEEEGFREGE). The segment covering 1000–1015 (GQGGAAAGEAGPGGEL) has biased composition (gly residues). A compositionally biased stretch (acidic residues) spans 1016-1029 (AEGEGEAGEGEAAE).

It belongs to the CFAP91 family. As to quaternary structure, identified in a spoke-associated complex containing CFAP61, CFAP91 and CFAP251; the complex is associated with the radial spokes of the axoneme. The complex associates with Calmodulin; the association is calcium sensitive. Interacts with RSP3.

It localises to the cytoplasm. Its subcellular location is the cytoskeleton. It is found in the flagellum axoneme. In terms of biological role, as component of a spoke-associated complex, regulates flagellar dynein activity by mediating regulatory signals between the radial spokes and dynein arms. The protein is Cilia- and flagella-associated protein 91 of Chlamydomonas reinhardtii (Chlamydomonas smithii).